A 1160-amino-acid chain; its full sequence is Protein translocase subunit SecA (1160 aa).

Residues Q162 and 180–184 each bind ATP; that span reads GEGKT. A disordered region spans residues 342 to 362; that stretch reads LLEEKEEAEEEGDSRRAQELE. Acidic residues predominate over residues 344-353; that stretch reads EEKEEAEEEG. D726 contacts ATP. The disordered stretch occupies residues 1060 to 1134; it reads EVQTEGQGPR…RNEYVTVRNN (75 aa). Over residues 1074–1083 the composition is skewed to polar residues; the sequence is QRNAQTQHDS. The span at 1104–1115 shows a compositional bias: basic and acidic residues; the sequence is AAERDPTVEEKQ.

This sequence belongs to the SecA family. As to quaternary structure, monomer and homodimer. Part of the essential Sec protein translocation apparatus which comprises SecA, SecYEG and auxiliary proteins SecDF. Other proteins may also be involved.

It is found in the cell inner membrane. The protein localises to the cytoplasm. It carries out the reaction ATP + H2O + cellular proteinSide 1 = ADP + phosphate + cellular proteinSide 2.. Its function is as follows. Part of the Sec protein translocase complex. Interacts with the SecYEG preprotein conducting channel. Has a central role in coupling the hydrolysis of ATP to the transfer of proteins into and across the cell membrane, serving as an ATP-driven molecular motor driving the stepwise translocation of polypeptide chains across the membrane. This is Protein translocase subunit SecA from Salinibacter ruber (strain DSM 13855 / M31).